The primary structure comprises 602 residues: PEX5-related protein (602 aa).

Disordered regions lie at residues 94-140 (VSQT…PETS) and 167-206 (HLMAERKSCSSRAGSKELLWSSEHRSQPELSTGKSALNSE). Phosphoserine is present on residues Ser181, Ser229, Ser233, and Ser237. TPR repeat units follow at residues 302–335 (WPGAFEEGLKRLKEGDLPVTILFMEAAILQDPGN), 336–369 (AEAWQFLGITQAENENEQAAIVALQRCLELQPNN), and 371–403 (KALMALAVSYTNTSHQQDACEALKNWIKQNPKY). Ser421 and Ser423 each carry phosphoserine. TPR repeat units follow at residues 450–483 (PDLQTGLGVLFHLSGEFNRAIDAFNAALTVRPED), 485–517 (SLWNRLGATLANGDRSEEAVEAYTRALEIQPGF), and 519–551 (RSRYNLGISCINLGAYREAVSNFLTALSLQRKS).

It belongs to the peroxisomal targeting signal receptor family. In terms of assembly, forms an obligate 4:4 complex with HCN2. Interacts with RAB8B. Interacts with HCN3. Interacts with HCN4 with a 4:4 HCN4:PEX5L stoichiometry; reduces the effects of cAMP on the voltage-dependence and rate of activation of HCN4. In terms of tissue distribution, brain specific.

Its subcellular location is the cytoplasm. It localises to the membrane. Functionally, accessory subunit of hyperpolarization-activated cyclic nucleotide-gated (HCN) channels, regulating their cell-surface expression and cyclic nucleotide dependence. The sequence is that of PEX5-related protein (Pex5l) from Rattus norvegicus (Rat).